The sequence spans 692 residues: Elongation factor G (692 aa).

Positions 8 to 282 constitute a tr-type G domain; sequence AKTRNIGIMA…AVIAYLPSPL (275 aa). Residues 17-24, 81-85, and 135-138 contribute to the GTP site; these read AHVDAGKT, DTPGH, and NKMD.

The protein belongs to the TRAFAC class translation factor GTPase superfamily. Classic translation factor GTPase family. EF-G/EF-2 subfamily.

It is found in the cytoplasm. In terms of biological role, catalyzes the GTP-dependent ribosomal translocation step during translation elongation. During this step, the ribosome changes from the pre-translocational (PRE) to the post-translocational (POST) state as the newly formed A-site-bound peptidyl-tRNA and P-site-bound deacylated tRNA move to the P and E sites, respectively. Catalyzes the coordinated movement of the two tRNA molecules, the mRNA and conformational changes in the ribosome. The sequence is that of Elongation factor G from Streptococcus pyogenes serotype M49 (strain NZ131).